We begin with the raw amino-acid sequence, 504 residues long: Maturase K (504 aa).

This sequence belongs to the intron maturase 2 family. MatK subfamily.

It localises to the plastid. Its subcellular location is the chloroplast. Usually encoded in the trnK tRNA gene intron. Probably assists in splicing its own and other chloroplast group II introns. In Erythrina crista-galli (Cockspur coral tree), this protein is Maturase K.